Consider the following 1372-residue polypeptide: DNA-directed RNA polymerase subunit beta' (1372 aa).

The Zn(2+) site is built by Cys-69, Cys-71, Cys-84, and Cys-87. Positions 460, 462, and 464 each coordinate Mg(2+). Zn(2+) is bound by residues Cys-808, Cys-882, Cys-889, and Cys-892.

It belongs to the RNA polymerase beta' chain family. The RNAP catalytic core consists of 2 alpha, 1 beta, 1 beta' and 1 omega subunit. When a sigma factor is associated with the core the holoenzyme is formed, which can initiate transcription. Mg(2+) is required as a cofactor. Zn(2+) serves as cofactor.

The catalysed reaction is RNA(n) + a ribonucleoside 5'-triphosphate = RNA(n+1) + diphosphate. DNA-dependent RNA polymerase catalyzes the transcription of DNA into RNA using the four ribonucleoside triphosphates as substrates. This chain is DNA-directed RNA polymerase subunit beta', found in Rickettsia typhi (strain ATCC VR-144 / Wilmington).